Reading from the N-terminus, the 728-residue chain is Fibulin-1 (728 aa).

The first 17 residues, Met-1–Ala-17, serve as a signal peptide directing secretion. 30 disulfide bridges follow: Cys-23–Cys-49, Cys-24–Cys-56, Cys-37–Cys-57, Cys-66–Cys-94, Cys-79–Cys-95, Cys-97–Cys-121, Cys-98–Cys-128, Cys-111–Cys-129, Cys-159–Cys-168, Cys-164–Cys-178, Cys-180–Cys-279, Cys-285–Cys-298, Cys-292–Cys-307, Cys-347–Cys-359, Cys-353–Cys-368, Cys-375–Cys-388, Cys-394–Cys-404, Cys-399–Cys-413, Cys-415–Cys-428, Cys-434–Cys-448, Cys-442–Cys-457, Cys-459–Cys-472, Cys-478–Cys-489, Cys-485–Cys-498, Cys-500–Cys-513, Cys-519–Cys-534, Cys-530–Cys-543, Cys-545–Cys-558, Cys-564–Cys-576, and Cys-569–Cys-585. Anaphylatoxin-like domains are found at residues Cys-23–Asn-64, Ala-65–Asp-96, and Cys-97–Cys-129. In terms of domain architecture, EGF-like 1 spans Leu-155–Val-194. One can recognise an EGF-like 2; calcium-binding domain in the interval Asp-195–Val-280. Residues Asp-281–Ile-344 enclose the EGF-like 3; calcium-binding domain. The 47-residue stretch at Asp-343–Glu-389 folds into the EGF-like 4; calcium-binding domain. The region spanning Asp-390–Glu-429 is the EGF-like 5; calcium-binding domain. The region spanning Asp-430 to Glu-473 is the EGF-like 6; calcium-binding domain. One can recognise an EGF-like 7; calcium-binding domain in the interval Asp-474–Glu-514. The EGF-like 8; calcium-binding domain maps to Asp-515 to Val-559. The EGF-like 9; calcium-binding domain occupies Asp-560 to Cys-610. Residue Asn-624 is glycosylated (N-linked (GlcNAc...) asparagine).

The protein belongs to the fibulin family. As to quaternary structure, homomultimerizes and interacts with various extracellular matrix components. In terms of tissue distribution, expressed in head muscle cells, anterior and posterior intestinal cells. Isoform a: Expressed in male and hermaphrodite gonad, anterior and posterior intestine and pharyngeal basement membranes, body-wall muscle, GLR cells, uterine attachment and mechanosensory neurons. Isoform c: Expressed on ALM/PLM mechanosensory neuron attachments, in flexible tracks connecting the pharyngeal, body-wall-muscle basement membranes and in uterine attachments.

The protein localises to the secreted. Its subcellular location is the extracellular space. It is found in the extracellular matrix. It localises to the basement membrane. Functionally, incorporated into fibronectin-containing matrix fibers. Plays a role in cell adhesion and migration along protein fibers within the extracellular matrix (ECM). Important for certain developmental processes and contributes to the supramolecular organization of ECM architecture, in particular to those of basement membranes. Its function is as follows. Involved in regulating the shape and adhesion of cells in the developing pharynx, intestine, body-wall muscle and gonadal tissue. During gonadogenesis, regulates the width of gonads and the migration of distal tip cells (DTC). Together with type IV collagen let-2 and downstream of metalloprotease mig-17, recruits nidogen nid-1 to the gonad basement membrane thereby inducing basement membrane remodeling required for the directional migration of DTCs. Acts antagonistically with metalloprotease gon-1 to maintain optimal levels of type IV collagen emb-9 in the gonad basement membrane during gonadogenesis. Required for larval development. Involved in the assembly of the flexible hemicentin-containing tracks found joining the pharynx and body-wall-muscle basement membranes. In Caenorhabditis elegans, this protein is Fibulin-1 (fbl-1).